The chain runs to 574 residues: 5'-nucleotidase (574 aa).

Positions 1–26 (MCPRAARAPATLLLALGAVLWPAAGA) are cleaved as a signal peptide. Zn(2+)-binding residues include aspartate 36 and histidine 38. A disulfide bridge links cysteine 51 with cysteine 57. An N-linked (GlcNAc...) asparagine glycan is attached at asparagine 53. Zn(2+)-binding residues include aspartate 85, asparagine 117, histidine 220, and histidine 243. Residues asparagine 311 and asparagine 333 are each glycosylated (N-linked (GlcNAc...) asparagine). Disulfide bonds link cysteine 353/cysteine 358 and cysteine 365/cysteine 387. Position 354 (arginine 354) interacts with AMP. Arginine 354 contributes to the IMP binding site. AMP is bound by residues asparagine 390 and arginine 395. The IMP site is built by asparagine 390 and arginine 395. Asparagine 403 is a glycosylation site (N-linked (GlcNAc...) asparagine). Phenylalanine 417 contributes to the AMP binding site. Phenylalanine 417 lines the IMP pocket. A disulfide bridge links cysteine 476 with cysteine 479. AMP contacts are provided by phenylalanine 500 and aspartate 506. Phenylalanine 500 and aspartate 506 together coordinate IMP. The GPI-anchor amidated serine moiety is linked to residue serine 549. Positions 550-574 (TGSHCHGSFSLIFLSLWAVIFVLYQ) are cleaved as a propeptide — removed in mature form.

Belongs to the 5'-nucleotidase family. In terms of assembly, homodimer. Zn(2+) serves as cofactor.

The protein resides in the cell membrane. The catalysed reaction is a ribonucleoside 5'-phosphate + H2O = a ribonucleoside + phosphate. It catalyses the reaction a 2'-deoxyribonucleoside 5'-phosphate + H2O = a 2'-deoxyribonucleoside + phosphate. It carries out the reaction dTMP + H2O = thymidine + phosphate. The enzyme catalyses CMP + H2O = cytidine + phosphate. The catalysed reaction is IMP + H2O = inosine + phosphate. It catalyses the reaction AMP + H2O = adenosine + phosphate. It carries out the reaction GMP + H2O = guanosine + phosphate. The enzyme catalyses UMP + H2O = uridine + phosphate. The catalysed reaction is dAMP + H2O = 2'-deoxyadenosine + phosphate. It catalyses the reaction dCMP + H2O = 2'-deoxycytidine + phosphate. With respect to regulation, inhibited by adenosine 5'-(alpha,beta-methylene)-diphosphate (AMPCP). Catalyzes the hydrolysis of nucleotide monophosphates, releasing inorganic phosphate and the corresponding nucleoside, with AMP being the preferred substrate. Shows a preference for ribonucleotide monophosphates over their equivalent deoxyribose forms. Other substrates include IMP, UMP, GMP, CMP, dAMP, dCMP, dTMP, NAD and NMN. The sequence is that of 5'-nucleotidase (NT5E) from Homo sapiens (Human).